The primary structure comprises 663 residues: Transmembrane 9 superfamily member 2 (663 aa).

A signal peptide spans 1 to 28; sequence MSSRPPASLPARGPRLLLLSLLLLGTVP. Residues 29–300 lie on the Lumenal side of the membrane; the sequence is GPRPGSAFYL…LESMPHTHIQ (272 aa). Residues 301 to 321 form a helical membrane-spanning segment; that stretch reads WFSIMNSLVIVLFLSGMVAMI. Topologically, residues 322-374 are cytoplasmic; sequence MLRTLHKDIARYNQMDSTEDAQEEFGWKLVHGDIFRPPRKGMLLSVFLGSGTQ. Residues 375–395 form a helical membrane-spanning segment; it reads ILIMTFVTLFFACLGFLSPAN. The Lumenal portion of the chain corresponds to 396-398; it reads RGA. Residues 399–419 form a helical membrane-spanning segment; sequence LMTCAVVLWVLLGTPAGYVAA. Residues 420-437 lie on the Cytoplasmic side of the membrane; that stretch reads RFYKSFGGEKWKTNVLLT. A helical transmembrane segment spans residues 438 to 458; the sequence is SFLCPGIVFADFFIMNLILWG. The Lumenal portion of the chain corresponds to 459-466; the sequence is EGSSAAIP. Residues 467-487 form a helical membrane-spanning segment; the sequence is FGTLVAILALWFCISVPLTFI. The Cytoplasmic portion of the chain corresponds to 488 to 522; it reads GAYFGFKKNAIEHPVRTNQIPRQIPEQSFYTKPLP. A helical membrane pass occupies residues 523–543; it reads GIIMGGILPFGCIFIQLFFIL. Topologically, residues 544-554 are lumenal; the sequence is NSIWSHQMYYM. Residues 555 to 575 traverse the membrane as a helical segment; sequence FGFLFLVFIILVITCSEATIL. Residues 576-591 lie on the Cytoplasmic side of the membrane; sequence LCYFHLCAEDYHWQWR. The chain crosses the membrane as a helical span at residues 592 to 612; that stretch reads SFLTSGFTAVYFLVYAIHYFF. Residues 613-631 are Lumenal-facing; sequence SKLQITGTASTILYFGYTM. A helical membrane pass occupies residues 632 to 652; sequence IMVLIFFLFTGTIGFFACFWF. At 653–663 the chain is on the cytoplasmic side; it reads VTKIYSVVKVD.

It belongs to the nonaspanin (TM9SF) (TC 9.A.2) family.

The protein resides in the endosome membrane. Its subcellular location is the golgi outpost. It localises to the cytoplasm. The protein localises to the cytoskeleton. It is found in the microtubule organizing center. In the intracellular compartments, may function as a channel or small molecule transporter. The sequence is that of Transmembrane 9 superfamily member 2 (Tm9sf2) from Rattus norvegicus (Rat).